A 146-amino-acid chain; its full sequence is uncharacterized protein (146 aa).

Positions 1–24 (MVIYYGKKNCTLLLLLFILCNIYS) are cleaved as a signal peptide. N-linked (GlcNAc...) asparagine glycans are attached at residues Asn-99 and Asn-106.

This is an uncharacterized protein from Saccharomyces cerevisiae (strain ATCC 204508 / S288c) (Baker's yeast).